Reading from the N-terminus, the 176-residue chain is Shikimate kinase (176 aa).

14–19 (GAGKST) contributes to the ATP binding site. Ser-18 contributes to the Mg(2+) binding site. The substrate site is built by Asp-36, Arg-60, and Gly-83. Arg-121 is an ATP binding site. Residue Arg-140 coordinates substrate.

Belongs to the shikimate kinase family. In terms of assembly, monomer. Mg(2+) is required as a cofactor.

The protein localises to the cytoplasm. The catalysed reaction is shikimate + ATP = 3-phosphoshikimate + ADP + H(+). Its pathway is metabolic intermediate biosynthesis; chorismate biosynthesis; chorismate from D-erythrose 4-phosphate and phosphoenolpyruvate: step 5/7. Its function is as follows. Catalyzes the specific phosphorylation of the 3-hydroxyl group of shikimic acid using ATP as a cosubstrate. This is Shikimate kinase from Francisella tularensis subsp. tularensis (strain FSC 198).